The chain runs to 191 residues: Holliday junction branch migration complex subunit RuvA (191 aa).

The tract at residues 1 to 63 is domain I; the sequence is MIRYLRGLVL…EEGLSLYGFP (63 aa). Residues 64 to 136 are domain II; it reads DEENLALFEL…LKGKVPPHLL (73 aa). The interval 136 to 140 is flexible linker; the sequence is LAGEK. Positions 141-191 are domain III; that stretch reads VESEAAEEAVMALAALGFKEAQARAVVLDLLAQNPKARAQDLIKEALKRLR.

Belongs to the RuvA family. Homotetramer. Forms an RuvA(8)-RuvB(12)-Holliday junction (HJ) complex. HJ DNA is sandwiched between 2 RuvA tetramers; dsDNA enters through RuvA and exits via RuvB. An RuvB hexamer assembles on each DNA strand where it exits the tetramer. Each RuvB hexamer is contacted by two RuvA subunits (via domain III) on 2 adjacent RuvB subunits; this complex drives branch migration. In the full resolvosome a probable DNA-RuvA(4)-RuvB(12)-RuvC(2) complex forms which resolves the HJ.

It is found in the cytoplasm. Functionally, the RuvA-RuvB-RuvC complex processes Holliday junction (HJ) DNA during genetic recombination and DNA repair, while the RuvA-RuvB complex plays an important role in the rescue of blocked DNA replication forks via replication fork reversal (RFR). RuvA specifically binds to HJ cruciform DNA, conferring on it an open structure. The RuvB hexamer acts as an ATP-dependent pump, pulling dsDNA into and through the RuvAB complex. HJ branch migration allows RuvC to scan DNA until it finds its consensus sequence, where it cleaves and resolves the cruciform DNA. This chain is Holliday junction branch migration complex subunit RuvA, found in Thermus thermophilus (strain ATCC BAA-163 / DSM 7039 / HB27).